Reading from the N-terminus, the 401-residue chain is 8-amino-7-oxononanoate synthase (401 aa).

Arg-24 is a binding site for substrate. Position 111–112 (111–112 (GF)) interacts with pyridoxal 5'-phosphate. Residue His-137 participates in substrate binding. 3 residues coordinate pyridoxal 5'-phosphate: Ser-183, His-211, and Thr-240. Lys-243 carries the N6-(pyridoxal phosphate)lysine modification. Residue Thr-357 coordinates substrate.

Belongs to the class-II pyridoxal-phosphate-dependent aminotransferase family. BioF subfamily. In terms of assembly, homodimer. Pyridoxal 5'-phosphate is required as a cofactor.

The enzyme catalyses 6-carboxyhexanoyl-[ACP] + L-alanine + H(+) = (8S)-8-amino-7-oxononanoate + holo-[ACP] + CO2. It functions in the pathway cofactor biosynthesis; biotin biosynthesis. In terms of biological role, catalyzes the decarboxylative condensation of pimeloyl-[acyl-carrier protein] and L-alanine to produce 8-amino-7-oxononanoate (AON), [acyl-carrier protein], and carbon dioxide. In Xanthomonas oryzae pv. oryzae (strain MAFF 311018), this protein is 8-amino-7-oxononanoate synthase.